A 62-amino-acid chain; its full sequence is MNAITTIKCPQCRKETTLAGNPYRPFCSQRCKMIDLGTWADEGYRIPGEKAPESGGEEPGDE.

4 residues coordinate Zn(2+): Cys9, Cys12, Cys27, and Cys31. The segment covering 43–52 has biased composition (basic and acidic residues); it reads GYRIPGEKAP. Residues 43–62 form a disordered region; the sequence is GYRIPGEKAPESGGEEPGDE.

This sequence belongs to the DNA gyrase inhibitor YacG family. Interacts with GyrB. The cofactor is Zn(2+).

Inhibits all the catalytic activities of DNA gyrase by preventing its interaction with DNA. Acts by binding directly to the C-terminal domain of GyrB, which probably disrupts DNA binding by the gyrase. This is DNA gyrase inhibitor YacG from Geobacter sp. (strain M21).